The sequence spans 265 residues: Capsule polysaccharide export inner-membrane protein BexB (265 aa).

6 helical membrane passes run 37–57, 64–84, 121–141, 148–168, 178–198, and 235–255; these read IGFL…VMMW, KFST…AMMW, VAGA…IGWI, FYML…GLII, FGKI…AFFF, and ESIG…LVMV. In terms of domain architecture, ABC transmembrane type-2 spans 37–258; the sequence is IGFLWLFVEP…LMGLVMVKNF (222 aa).

It belongs to the ABC-2 integral membrane protein family.

Its subcellular location is the cell inner membrane. In terms of biological role, may form an ATP-driven capsule polysaccharide export apparatus, in association with the BexA, BexC and BexD proteins. The polypeptide is Capsule polysaccharide export inner-membrane protein BexB (bexB) (Haemophilus influenzae).